The sequence spans 240 residues: Protein unc-119 homolog A (240 aa).

A compositionally biased stretch (gly residues) spans 1–12 (MKVKKGGGGTGP). Residues 1–62 (MKVKKGGGGT…PLQGKQPIGP (62 aa)) are disordered. Phosphoserine; by CK2 occurs at positions 37, 39, and 41. Tyr131 lines the tetradecanoate pocket.

The protein belongs to the PDE6D/unc-119 family. As to quaternary structure, interacts with CABP4; in the absence of calcium. May interact with GTP-bound ARL1. Interacts with ARL2 and ARL3 (GTP-bound forms); this promotes the release of myristoylated cargo proteins. Found in a complex with ARL3, RP2 and UNC119; RP2 induces hydrolysis of GTP ARL3 in the complex, leading to the release of UNC119. Interacts with NPHP3 (when myristoylated). Interacts with CYS1 (when myristoylated). Interacts with MACIR; interaction only takes place when UNC119 is not liganded with myristoylated proteins. Interacts with ARL1 and ARL3 GTP-bound forms. Interacts with ARL2. Interacts with ARL2. Interacts with LCK; this interaction plays a crucial role in activation of LCK. Interacts with FYN. Interacts with RAB11A; in a cell cycle-dependent manner. Interacts with LYN (via SH2 and SH3 domains); leading to LYN activation. Interacts with DNM1; leading to a decrease of DNM1 GTPase activity. Found in a complex with ABL1, ABL2, CRK and UNC119; leading to the inhibition of CRK phosphorylation by ABL kinases. Interacts with CD44. Interacts with KLHL18 (via kelch repeats). Interacts with PPP3CA, PPP3CB and PPP3CC. Interacts with USP48; this interaction promotes UNC119 stability. In terms of processing, phosphorylation suppresses its interaction with KLHL18 and down-regulates its KLHL18-mediated degradation. Phosphorylated more under light conditions than dark conditions. Dephosphorylated by calcineurin.

It localises to the cytoplasm. The protein resides in the cytoskeleton. Its subcellular location is the microtubule organizing center. It is found in the centrosome. The protein localises to the spindle. It localises to the spindle pole. Functionally, involved in synaptic functions in photoreceptor cells, the signal transduction in immune cells as a Src family kinase activator, endosome recycling, the uptake of bacteria and endocytosis, protein trafficking in sensory neurons and as lipid-binding chaperone with specificity for a diverse subset of myristoylated proteins. Specifically binds the myristoyl moiety of a subset of N-terminally myristoylated proteins and is required for their localization. Binds myristoylated GNAT1 and is required for G-protein localization and trafficking in sensory neurons. Probably plays a role in trafficking proteins in photoreceptor cells. Plays important roles in mediating Src family kinase signals for the completion of cytokinesis via RAB11A. The sequence is that of Protein unc-119 homolog A (Unc119) from Rattus norvegicus (Rat).